The following is an 828-amino-acid chain: MSRLIVKNLPPYLDEAGLKKHFSTVKDPKSAGFAPSDITDVKVVRARDGKTRRFGFVGFRSDETAEAAVKYFDTSFINSTKISVAVAMTFTDPNVPLSSRERKRQAAQRAREDAEDDREAKKARYLEKPMTIDDINGLGNASDPRLADYLDAMQVRSNAKTWANNDAGAVANEPQVIQSTASDDEYDEFTGKGDDEIDEDEDEEEESENKKDDDNEEAEEDEEDPVIEDGLAADPGVSDMDWLRQRQTRIKEGEPEEDRENRHTESKSEGKKGKGNAPKAATPVDEEPSEDPTIVSIRKTGRLFLRNLLYTAKEEDFRQLFSQYGELEEVHLPINTKTGQCKGFAHVQFEDPENAIAAYEAQDGKIFQGRLLHILPGKPKKDYNRLDEHDLKNLPLKKQQELKRKAEAAKQQFSWNSLYMNQDAVMESVAKSMGIKKSELIDPDSSDAAVKQALAEATVIGDVKSYFEKMGVDLASFDNKDRDDRVILVKNFPFGTTQPEIAEMFSEYGDLYKVMMPPAGTIAIVIFKHIPDARAAFAKLAFRRFKTSILYLEKGPKNLLPNEKMESDEVEHVKQDKIVTIEDKLSASDVMDTGSNDERPATASTSVFVKNLNFKTTSRVLTDAFKALDGFLVAQVKMKPDSKNKGKFLSMGFGFVEFSSKEAAEIAQKAMDGHVLDGHKLQLKISNRGQDEETTETKKAIDSKILIKNLPFEATKKDVQKLFGAFGSLKTVRVPKKFNSESRGFAFAEYVSAKEAEHAMSALQGTHLLGRRLVLQYAQADASNAEEEIERMQATVSKQAAQRSFADMKLAGEGKRRVDLEGEDEEEF.

One can recognise an RRM 1 domain in the interval 2 to 89; sequence SRLIVKNLPP…TKISVAVAMT (88 aa). Disordered regions lie at residues 97–125 and 166–293; these read LSSRERKRQAAQRAREDAEDDREAKKARY and DAGA…EDPT. Acidic residues-rich tracts occupy residues 195–207 and 214–227; these read DEIDEDEDEEEES and DNEEAEEDEEDPVI. Residues 241-272 show a composition bias toward basic and acidic residues; sequence DWLRQRQTRIKEGEPEEDRENRHTESKSEGKK. RRM domains are found at residues 301 to 379, 485 to 557, 605 to 688, and 703 to 780; these read GRLF…PGKP, RVIL…KGPK, TSVF…ISNR, and SKIL…YAQA.

It belongs to the RRM MRD1 family.

The protein resides in the nucleus. Involved in pre-rRNA processing. In Yarrowia lipolytica (strain CLIB 122 / E 150) (Yeast), this protein is Multiple RNA-binding domain-containing protein 1 (MRD1).